The sequence spans 77 residues: SS18-like protein 2 (77 aa).

An SH2-binding motif is present at residues 50–53 (YQHV).

Belongs to the SS18 family.

In Mus musculus (Mouse), this protein is SS18-like protein 2 (Ss18l2).